The sequence spans 430 residues: Adenylosuccinate synthetase (430 aa).

Residues 13-19 (GDEGKGK) and 41-43 (GHT) contribute to the GTP site. Residue Asp-14 is the Proton acceptor of the active site. Asp-14 and Gly-41 together coordinate Mg(2+). IMP is bound by residues 14 to 17 (DEGK), 39 to 42 (NAGH), Thr-130, Arg-144, Gln-225, Thr-240, and Arg-304. His-42 serves as the catalytic Proton donor. Residue 300–306 (ASTGRPR) participates in substrate binding. Residues Arg-306, 332–334 (KLD), and 414–416 (STG) contribute to the GTP site.

This sequence belongs to the adenylosuccinate synthetase family. Homodimer. The cofactor is Mg(2+).

It localises to the cytoplasm. It catalyses the reaction IMP + L-aspartate + GTP = N(6)-(1,2-dicarboxyethyl)-AMP + GDP + phosphate + 2 H(+). It functions in the pathway purine metabolism; AMP biosynthesis via de novo pathway; AMP from IMP: step 1/2. Its function is as follows. Plays an important role in the de novo pathway of purine nucleotide biosynthesis. Catalyzes the first committed step in the biosynthesis of AMP from IMP. The chain is Adenylosuccinate synthetase from Xanthomonas axonopodis pv. citri (strain 306).